Consider the following 120-residue polypeptide: UPF0231 protein NT01EI_0766 (120 aa).

Belongs to the UPF0231 family.

This chain is UPF0231 protein NT01EI_0766, found in Edwardsiella ictaluri (strain 93-146).